The sequence spans 473 residues: Suppressor of SWI4 1 homolog (473 aa).

The Brix domain occupies 29–292 (PHSFVFTRGC…LIKVQEGVGE (264 aa)). Phosphoserine is present on residues Ser-238 and Ser-240. A disordered region spans residues 323 to 473 (AQRQAQQAQN…GRGRPGKRVA (151 aa)). A compositionally biased stretch (low complexity) spans 324 to 334 (QRQAQQAQNVQ). The segment covering 335–352 (RKQEQREAHRKKSLEGMK) has biased composition (basic and acidic residues). Ser-359 carries the post-translational modification Phosphoserine. The segment covering 375–388 (LGEDDDEQEDDDIE) has biased composition (acidic residues). Over residues 409 to 421 (KRLAKSPGRKRKR) the composition is skewed to basic residues. Over residues 422 to 443 (WEMDRGRGRLCDQKFPKTKDKS) the composition is skewed to basic and acidic residues. Lys-438 carries the post-translational modification N6-acetyllysine. The span at 462–473 (GRGRGRPGKRVA) shows a compositional bias: basic residues.

Widely expressed.

The protein resides in the nucleus. Its subcellular location is the nucleolus. Its function is as follows. May have a role in cell growth. The chain is Suppressor of SWI4 1 homolog (PPAN) from Homo sapiens (Human).